The chain runs to 407 residues: SERPINE1 mRNA-binding protein 1 (407 aa).

Ser-25 carries the post-translational modification Phosphoserine. Positions 33–227 (AAENKKKEAG…GSGSHNWGTV (195 aa)) are disordered. Residues 51-68 (AKSAAQAAAQTNSNAAGK) are compositionally biased toward low complexity. Lys-52 is subject to N6-acetyllysine; alternate. Lys-52 participates in a covalent cross-link: Glycyl lysine isopeptide (Lys-Gly) (interchain with G-Cter in SUMO1); alternate. Lys-68 carries the post-translational modification N6-acetyllysine. Composition is skewed to basic and acidic residues over residues 70-80 (LRKESQKDRKN), 89-114 (ADKKEETQPPVALKKEGIRRVGRRPD), and 122-162 (KLID…ERPI). A Glycyl lysine isopeptide (Lys-Gly) (interchain with G-Cter in SUMO2) cross-link involves residue Lys-102. Lys-122 and Lys-140 each carry N6-acetyllysine. The span at 164–182 (GRGGLGRGRGGRGRGMGRG) shows a compositional bias: gly residues. An omega-N-methylarginine mark is found at Arg-165 and Arg-188. Basic and acidic residues predominate over residues 183 to 199 (DGFDSRGKREFDRHSGS). Ser-197, Ser-199, Ser-203, Ser-205, and Ser-208 each carry phosphoserine. Lys-211 is subject to N6-acetyllysine; alternate. Lys-211 participates in a covalent cross-link: Glycyl lysine isopeptide (Lys-Gly) (interchain with G-Cter in SUMO2); alternate. At Arg-216 the chain carries Omega-N-methylarginine. A Phosphoserine modification is found at Ser-221. Thr-226 is subject to Phosphothreonine. Residue Lys-228 forms a Glycyl lysine isopeptide (Lys-Gly) (interchain with G-Cter in SUMO1); alternate linkage. A Glycyl lysine isopeptide (Lys-Gly) (interchain with G-Cter in SUMO2); alternate cross-link involves residue Lys-228. Leu-231, Ser-234, and Tyr-237 each carry phosphoserine. Ser-234 carries the phosphothreonine modification. Phosphothreonine is present on Lys-240. Positions 242–256 (ISYNCSDLDQSNVTE) are enriched in polar residues. 2 disordered regions span residues 242 to 288 (ISYN…KEMT) and 327 to 407 (SKSE…PALA). The segment covering 261–274 (GEEHPVADTENKEN) has biased composition (basic and acidic residues). Lys-280 participates in a covalent cross-link: Glycyl lysine isopeptide (Lys-Gly) (interchain with G-Cter in SUMO2). Positions 327–341 (SKSEEAHAEDSVMDH) are enriched in basic and acidic residues. Lys-328 carries the N6-acetyllysine modification. Ser-329 carries the phosphoserine modification. Over residues 362-371 (GRPGRGGRGG) the composition is skewed to gly residues. Residues Arg-363, Arg-366, and Arg-369 each carry the omega-N-methylarginine modification. Residues Ser-391 and Ser-393 each carry the phosphoserine modification.

This sequence belongs to the SERBP1-HABP4 family. As to quaternary structure, associates with mature 80S ribosomes. Interacts with EEF2/eEF2; interaction sequesters EEF2/eEF2 at the A-site of the ribosome, thereby blocking the interaction sites of the mRNA-tRNA complex, promoting ribosome stabilization and hibernation. Interacts with SPIN1. Interacts with CHD3 and TDRD3. Interacts with ZDHHC17 (via ANK repeats). In terms of processing, phosphorylation by MTOR inhibits SERBP1 and relieves ribosome hibernation.

It localises to the cytoplasm. The protein localises to the nucleus. The protein resides in the perinuclear region. Functionally, ribosome-binding protein that promotes ribosome hibernation, a process during which ribosomes are stabilized in an inactive state and preserved from proteasomal degradation. Acts via its association with EEF2/eEF2 factor, sequestering EEF2/eEF2 at the A-site of the ribosome and promoting ribosome stabilization and storage in an inactive state. May also play a role in the regulation of mRNA stability: binds to the 3'-most 134 nt of the SERPINE1/PAI1 mRNA, a region which confers cyclic nucleotide regulation of message decay. Seems to play a role in PML-nuclear bodies formation. The protein is SERPINE1 mRNA-binding protein 1 of Mus musculus (Mouse).